We begin with the raw amino-acid sequence, 325 residues long: tRNA (guanine-N(7)-)-methyltransferase (325 aa).

Residues 1–101 are disordered; the sequence is MSEATDKQKQ…LEYPKSPESM (101 aa). Polar residues predominate over residues 51–69; that stretch reads VSTTPEPEQSDSSATTATI. Residues Gly-122, 145-146, 199-200, and Cys-219 contribute to the S-adenosyl-L-methionine site; these read EI and NA. Residue Asp-222 is part of the active site. 297–299 provides a ligand contact to S-adenosyl-L-methionine; that stretch reads TEE.

Belongs to the class I-like SAM-binding methyltransferase superfamily. TrmB family. In terms of assembly, forms a complex with TRM82.

The protein resides in the nucleus. It carries out the reaction guanosine(46) in tRNA + S-adenosyl-L-methionine = N(7)-methylguanosine(46) in tRNA + S-adenosyl-L-homocysteine. It participates in tRNA modification; N(7)-methylguanine-tRNA biosynthesis. Its function is as follows. Catalyzes the formation of N(7)-methylguanine at position 46 (m7G46) in tRNA. This Candida albicans (strain SC5314 / ATCC MYA-2876) (Yeast) protein is tRNA (guanine-N(7)-)-methyltransferase.